Reading from the N-terminus, the 692-residue chain is UvrABC system protein B (692 aa).

Residues 32 to 187 form the Helicase ATP-binding domain; the sequence is ENIENGEKAQ…LLNDLVGIQF (156 aa). An ATP-binding site is contributed by 45–52; that stretch reads GATGTGKT. Residues 98-121 carry the Beta-hairpin motif; sequence YYDYYQPEAYVPSSDTYIEKDSSV. In terms of domain architecture, Helicase C-terminal spans 436 to 631; it reads QIDDLVGEIH…TIKKEIRDLI (196 aa). One can recognise a UVR domain in the interval 656–691; the sequence is KALVKKLEKEMQQAAAALDFEGAAQLRDMVLELRAM.

The protein belongs to the UvrB family. Forms a heterotetramer with UvrA during the search for lesions. Interacts with UvrC in an incision complex.

Its subcellular location is the cytoplasm. In terms of biological role, the UvrABC repair system catalyzes the recognition and processing of DNA lesions. A damage recognition complex composed of 2 UvrA and 2 UvrB subunits scans DNA for abnormalities. Upon binding of the UvrA(2)B(2) complex to a putative damaged site, the DNA wraps around one UvrB monomer. DNA wrap is dependent on ATP binding by UvrB and probably causes local melting of the DNA helix, facilitating insertion of UvrB beta-hairpin between the DNA strands. Then UvrB probes one DNA strand for the presence of a lesion. If a lesion is found the UvrA subunits dissociate and the UvrB-DNA preincision complex is formed. This complex is subsequently bound by UvrC and the second UvrB is released. If no lesion is found, the DNA wraps around the other UvrB subunit that will check the other stand for damage. This is UvrABC system protein B from Lactococcus lactis subsp. cremoris (strain SK11).